Here is a 474-residue protein sequence, read N- to C-terminus: Trichothecene 3-O-acetyltransferase (474 aa).

This sequence belongs to the trichothecene 3-O-acetyltransferase family.

Functionally, trichothecene 3-O-acetyltransferase involved in self-protection against trichothecenes, mycotoxins acting as eukaryotic protein synthesis inhibitors. Its existence is surprising in a non-trichothecene producer organism which needs no self-protection again endogenic trichothecenes. The persistence of this non-essential gene may be due to a selective advantage that it may confer, like a resistance to exogenic trichothecenes. The chain is Trichothecene 3-O-acetyltransferase (AYT1) from Saccharomyces cerevisiae (strain ATCC 204508 / S288c) (Baker's yeast).